We begin with the raw amino-acid sequence, 353 residues long: DNA replication and repair protein RecF (353 aa).

Residue 30–37 (GANGQGKT) coordinates ATP.

This sequence belongs to the RecF family.

It localises to the cytoplasm. Functionally, the RecF protein is involved in DNA metabolism; it is required for DNA replication and normal SOS inducibility. RecF binds preferentially to single-stranded, linear DNA. It also seems to bind ATP. The chain is DNA replication and repair protein RecF from Carboxydothermus hydrogenoformans (strain ATCC BAA-161 / DSM 6008 / Z-2901).